Here is a 170-residue protein sequence, read N- to C-terminus: Thialysine N-epsilon-acetyltransferase (170 aa).

The N-acetyltransferase domain occupies 4–166; sequence VLIREAKEGD…FRFEGEAMRE (163 aa). 27–28 lines the substrate pocket; that stretch reads YE. K29 carries the N6-acetyllysine modification. Residue E92 participates in substrate binding. Residues 94 to 96, 102 to 107, 133 to 135, and Y140 contribute to the acetyl-CoA site; these read IYV, GQGIGS, and NKK. Catalysis depends on Y140, which acts as the Proton donor. E152 lines the substrate pocket.

Belongs to the acetyltransferase family. Homodimer.

Its subcellular location is the cytoplasm. It carries out the reaction S-(2-aminoethyl)-L-cysteine + acetyl-CoA = S-(2-acetamidoethyl)-L-cysteine + CoA + H(+). The catalysed reaction is an alkane-alpha,omega-diamine + acetyl-CoA = an N-acetylalkane-alpha,omega-diamine + CoA + H(+). Functionally, catalyzes the N-acetylation of the amino acid thialysine (S-(2-aminoethyl)-L-cysteine), a L-lysine analog with the 4-methylene group substituted with a sulfur. May also catalyze acetylation of polyamines, such as norspermidine, spermidine or spermine. However, ability to acetylate polyamines is weak, suggesting that it does not act as a diamine acetyltransferase in vivo. In Sus scrofa (Pig), this protein is Thialysine N-epsilon-acetyltransferase.